The following is a 305-amino-acid chain: Phosphoinositol dihydroceramide synthase (305 aa).

The N-terminal stretch at 1–23 (MPSKKETLTVIVIMALFLLLTAA) is a signal peptide. Cys24 carries N-palmitoyl cysteine lipidation. Cys24 carries S-diacylglycerol cysteine lipidation. The next 6 membrane-spanning stretches (helical) occupy residues 41-61 (LFFA…FAIF), 117-137 (VFAG…GLCL), 149-169 (FALV…IHPA), 216-236 (FAAV…YAII), 241-261 (WYVI…AIYS), and 266-286 (IIDV…FEYG).

It is found in the membrane. The catalysed reaction is N-(2-hydroxy-fatty acyl)-dihydroceramide + a 1,2-diacyl-sn-glycero-3-phospho-(1D-myo-inositol) = inositol-1-phospho-N-(2-hydroxy-fatty acyl)-dihydroceramide + a 1,2-diacyl-sn-glycerol. Functionally, catalyzes the addition of a phosphorylinositol group onto dihydroceramide to form phosphoinositol dihydroceramide (PI-DHC), an essential step in sphingolipid biosynthesis. The protein is Phosphoinositol dihydroceramide synthase of Bacteroides thetaiotaomicron (strain ATCC 29148 / DSM 2079 / JCM 5827 / CCUG 10774 / NCTC 10582 / VPI-5482 / E50).